The primary structure comprises 273 residues: R-spondin-3 (273 aa).

The N-terminal stretch at 1–21 (MHLRLISWFFIILNFMEYIGS) is a signal peptide. FU repeat units lie at residues 35 to 86 (PNVS…GYYG) and 92 to 135 (INKC…GLEA). Asn-36 is a glycosylation site (N-linked (GlcNAc...) asparagine). 11 disulfides stabilise this stretch: Cys-41–Cys-48, Cys-45–Cys-54, Cys-57–Cys-76, Cys-80–Cys-95, Cys-98–Cys-105, Cys-102–Cys-111, Cys-114–Cys-125, Cys-129–Cys-142, Cys-148–Cys-190, Cys-159–Cys-166, and Cys-199–Cys-206. The TSP type-1 domain maps to 147–207 (HCEASEWSPW…KCTVQRKKCP (61 aa)). A disordered region spans residues 201-273 (VQRKKCPKGE…QKSVSVSTVH (73 aa)). Residues 213–223 (RKGRERKRKKP) show a composition bias toward basic residues. Over residues 224 to 252 (NKEESKDAIPDNKGLEPSRETPEQRENKQ) the composition is skewed to basic and acidic residues.

The protein belongs to the R-spondin family. In terms of assembly, interacts with the extracellular domain of FZD8 and LRP6. It however does not form a ternary complex with FZD8 and LRP6. Interacts with WNT1. Binds heparin. Interacts with LGR4, LGR5 and LGR6.

The protein localises to the secreted. Functionally, activator of the canonical Wnt signaling pathway by acting as a ligand for LGR4-6 receptors, which acts as a key regulator of angiogenesis. Upon binding to LGR4-6 (LGR4, LGR5 or LGR6), LGR4-6 associate with phosphorylated LRP6 and frizzled receptors that are activated by extracellular Wnt receptors, triggering the canonical Wnt signaling pathway to increase expression of target genes. Also regulates the canonical Wnt/beta-catenin-dependent pathway and non-canonical Wnt signaling by acting as an inhibitor of ZNRF3, an important regulator of the Wnt signaling pathway. Acts as a ligand for frizzled FZD8 and LRP6. May negatively regulate the TGF-beta pathway. Acts as a key regulator of angiogenesis by controlling vascular stability and pruning: acts by activating the non-canonical Wnt signaling pathway in endothelial cells. Can also amplify Wnt signaling pathway independently of LGR4-6 receptors, possibly by acting as a direct antagonistic ligand to RNF43 and ZNRF3. The sequence is that of R-spondin-3 (RSPO3) from Bos taurus (Bovine).